Reading from the N-terminus, the 688-residue chain is Two-component response regulator ORR23 (688 aa).

One can recognise a Response regulatory domain in the interval arginine 25–isoleucine 140. 4-aspartylphosphate is present on aspartate 76. The disordered stretch occupies residues proline 161–proline 212. Acidic residues predominate over residues serine 193–aspartate 208. The segment at residues alanine 211 to lysine 270 is a DNA-binding region (myb-like GARP).

This sequence belongs to the ARR family. Type-B subfamily. Post-translationally, two-component system major event consists of a His-to-Asp phosphorelay between a sensor histidine kinase (HK) and a response regulator (RR). In plants, the His-to-Asp phosphorelay involves an additional intermediate named Histidine-containing phosphotransfer protein (HPt). This multistep phosphorelay consists of a His-Asp-His-Asp sequential transfer of a phosphate group between first a His and an Asp of the HK protein, followed by the transfer to a conserved His of the HPt protein and finally the transfer to an Asp in the receiver domain of the RR protein.

The protein localises to the nucleus. In terms of biological role, transcriptional activator that binds specific DNA sequence. Functions as a response regulator involved in His-to-Asp phosphorelay signal transduction system. Phosphorylation of the Asp residue in the receiver domain activates the ability of the protein to promote the transcription of target genes. May directly activate some type-A response regulators in response to cytokinins. This chain is Two-component response regulator ORR23, found in Oryza sativa subsp. indica (Rice).